The sequence spans 75 residues: Small ribosomal subunit protein bS18 (75 aa).

The protein belongs to the bacterial ribosomal protein bS18 family. Part of the 30S ribosomal subunit. Forms a tight heterodimer with protein bS6.

In terms of biological role, binds as a heterodimer with protein bS6 to the central domain of the 16S rRNA, where it helps stabilize the platform of the 30S subunit. The chain is Small ribosomal subunit protein bS18 from Shewanella halifaxensis (strain HAW-EB4).